We begin with the raw amino-acid sequence, 150 residues long: MTRENKTLNITEIQELLPHRYPFLLVDRVTDFEEEKYLHAIKNVSVNEPQFTGHFPQMPIFPGVLILEAMAQATGLLAFKSFGAPAENELYYFASIDKAKFRKPVVPGDQLVLEVEFIKDRRGIALFNGVAKVDGEVVCSAELKCARREF.

His54 is a catalytic residue.

The protein belongs to the thioester dehydratase family. FabZ subfamily.

Its subcellular location is the cytoplasm. The catalysed reaction is a (3R)-hydroxyacyl-[ACP] = a (2E)-enoyl-[ACP] + H2O. In terms of biological role, involved in unsaturated fatty acids biosynthesis. Catalyzes the dehydration of short chain beta-hydroxyacyl-ACPs and long chain saturated and unsaturated beta-hydroxyacyl-ACPs. This Aliivibrio fischeri (strain ATCC 700601 / ES114) (Vibrio fischeri) protein is 3-hydroxyacyl-[acyl-carrier-protein] dehydratase FabZ.